We begin with the raw amino-acid sequence, 149 residues long: Natriuretic peptides A (149 aa).

The signal sequence occupies residues 1–23 (MGSPIAASFLLFLAVQLLGQTGA). 2 consecutive propeptides follow at residues 24–121 (NPVY…AAPR) and 91–101 (DGGALGRSPWD). Residues 49-103 (MPLEDEAESPQALSEQNAEAGAALSPLPEVPPWTGEVSPAQRDGGALGRSPWDSS) form a disordered region. Position 127 is a phosphoserine (S127). An intrachain disulfide couples C128 to C144. The tract at residues 145–149 (NSFRY) is important for degradation of atrial natriuretic peptide by IDE.

Belongs to the natriuretic peptide family. In terms of assembly, homodimer; disulfide-linked antiparallel dimer. In terms of processing, the precursor molecule is proteolytically cleaved by CORIN at Arg-121 to produce the atrial natriuretic peptide. Undergoes further proteolytic cleavage by unknown proteases to give rise to long-acting natriuretic peptide, vessel dilator and kaliuretic peptide. Additional processing gives rise to the auriculin and atriopeptin peptides. In the kidneys, alternative processing by an unknown protease results in the peptide urodilatin. Post-translationally, cleavage by MME initiates degradation of the factor and thereby regulates its activity. Degradation by IDE results in reduced activation of NPR1 (in vitro). During IDE degradation, the resulting products can temporarily stimulate NPR2 to produce cGMP, before the fragments are completely degraded and inactivated by IDE (in vitro). Degraded by IDE. In terms of processing, phosphorylation on Ser-127 decreases vasorelaxant activity.

Its subcellular location is the secreted. It localises to the perikaryon. The protein localises to the cell projection. In terms of biological role, hormone that plays a key role in mediating cardio-renal homeostasis, and is involved in vascular remodeling and regulating energy metabolism. Acts by specifically binding and stimulating NPR1 to produce cGMP, which in turn activates effector proteins, such as PRKG1, that drive various biological responses. Regulates vasodilation, natriuresis, diuresis and aldosterone synthesis and is therefore essential for regulating blood pressure, controlling the extracellular fluid volume and maintaining the fluid-electrolyte balance. Also involved in inhibiting cardiac remodeling and cardiac hypertrophy by inducing cardiomyocyte apoptosis and attenuating the growth of cardiomyocytes and fibroblasts. Plays a role in female pregnancy by promoting trophoblast invasion and spiral artery remodeling in uterus, and thus prevents pregnancy-induced hypertension. In adipose tissue, acts in various cGMP- and PKG-dependent pathways to regulate lipid metabolism and energy homeostasis. This includes up-regulating lipid metabolism and mitochondrial oxygen utilization by activating the AMP-activated protein kinase (AMPK), and increasing energy expenditure by acting via MAPK11 to promote the UCP1-dependent thermogenesis of brown adipose tissue. Binds the clearance receptor NPR3 which removes the hormone from circulation. Its function is as follows. May have a role in cardio-renal homeostasis through regulation of natriuresis, diuresis, vasodilation, and inhibiting aldosterone synthesis. In vitro, promotes the production of cGMP and induces vasodilation. May promote natriuresis, at least in part, by enhancing prostaglandin E2 synthesis resulting in the inhibition of renal Na+-K+-ATPase. However reports on the involvement of this peptide in mammal blood volume and blood pressure homeostasis are conflicting; according to a report, in vivo it is not sufficient to activate cGMP and does not inhibit collecting duct transport nor effect diuresis and natriuresis. Appears to bind to specific receptors that are distinct from the receptors bound by atrial natriuretic peptide and vessel dilator. Possibly enhances protein excretion in urine by decreasing proximal tubular protein reabsorption. May have a role in cardio-renal homeostasis through regulation of natriuresis, diuresis, and vasodilation. In vitro, promotes the production of cGMP and induces vasodilation. May promote natriuresis, at least in part, by enhancing prostaglandin E2 synthesis resulting in the inhibition of renal Na+-K+-ATPase. However reports on the involvement of this peptide in mammal blood volume and blood pressure homeostasis are conflicting; according to a report it is not sufficient to activate cGMP and does not inhibit collecting duct transport nor effect diuresis and natriuresis. Appears to bind to specific receptors that are distinct from the receptors bound by the atrial natriuretic and long-acting natriuretic peptides. Possibly functions in protein excretion in urine by maintaining the integrity of the proximal tubules and enhancing protein excretion by decreasing proximal tubular protein reabsorption. Functionally, may have a role in cardio-renal homeostasis through regulation of diuresis and inhibiting aldosterone synthesis. In vitro, promotes the production of cGMP and induces vasodilation. May promote natriuresis, at least in part, by enhancing prostaglandin E2 synthesis resulting in the inhibition of renal Na+-K+-ATPase. May have a role in potassium excretion but not sodium excretion (natriuresis). Possibly enhances protein excretion in urine by decreasing proximal tubular protein reabsorption. In terms of biological role, hormone produced in the kidneys that appears to be important for maintaining cardio-renal homeostasis. Mediates vasodilation, natriuresis and diuresis primarily in the renal system, in order to maintain the extracellular fluid volume and control the fluid-electrolyte balance. Specifically binds and stimulates cGMP production by renal transmembrane receptors, likely NPR1. Urodilatin not ANP, may be the natriuretic peptide responsible for the regulation of sodium and water homeostasis in the kidney. Its function is as follows. May have a role in cardio-renal homeostasis through regulation of natriuresis and vasodilation. In vivo promotes natriuresis and in vitro, vasodilates renal artery strips. May have a role in cardio-renal homeostasis through regulation of regulation of natriuresis and vasodilation. In vivo promotes natriuresis. In vitro, vasodilates intestinal smooth muscle but not smooth muscle strips. Functionally, may have a role in cardio-renal homeostasis through regulation of natriuresis and vasodilation. In vivo promotes natriuresis. In vitro, selectively vasodilates intestinal and vascular smooth muscle strips. In terms of biological role, may have a role in cardio-renal homeostasis through regulation of natriuresis and vasodilation. In vivo promotes natriuresis. In vitro, selectively vasodilates intestinal smooth muscle but not vascular smooth muscle strips. The sequence is that of Natriuretic peptides A (NPPA) from Canis lupus familiaris (Dog).